We begin with the raw amino-acid sequence, 423 residues long: Gamma-glutamyl phosphate reductase (423 aa).

Belongs to the gamma-glutamyl phosphate reductase family.

It is found in the cytoplasm. The enzyme catalyses L-glutamate 5-semialdehyde + phosphate + NADP(+) = L-glutamyl 5-phosphate + NADPH + H(+). The protein operates within amino-acid biosynthesis; L-proline biosynthesis; L-glutamate 5-semialdehyde from L-glutamate: step 2/2. Functionally, catalyzes the NADPH-dependent reduction of L-glutamate 5-phosphate into L-glutamate 5-semialdehyde and phosphate. The product spontaneously undergoes cyclization to form 1-pyrroline-5-carboxylate. The chain is Gamma-glutamyl phosphate reductase from Burkholderia orbicola (strain AU 1054).